The primary structure comprises 100 residues: Secreted protein of Ly-6 domain 1 (100 aa).

The first 22 residues, methionine 1–alanine 22, serve as a signal peptide directing secretion. The UPAR/Ly6 domain occupies leucine 23 to phenylalanine 100. 5 cysteine pairs are disulfide-bonded: cysteine 25–cysteine 52, cysteine 28–cysteine 37, cysteine 44–cysteine 70, cysteine 74–cysteine 90, and cysteine 91–cysteine 97. A glycan (N-linked (GlcNAc...) asparagine) is linked at asparagine 60.

Post-translationally, glycosylated. Expressed in placenta, where it is detected in both fetal tissues (cotyledon and intercotyledon) and maternal tissues (caruncle and intercaruncular endometrium) (at protein level). Expressed in the mesenchyme area of villi in the cotyledon (at protein level). In endometrium, expressed in the luminal epithelium and weakly in the subluminal stroma (at protein level). Detected in trophoblast mononucleate cells (TMCs) (at protein level). Also detected in trophoblast binucleate cells (BNCs). Overall, expression is strongest in fetal tissue and lower in maternal tissue. Not detected in other tissues tested.

The protein localises to the secreted. Its function is as follows. Binds specifically to type I collagen. The sequence is that of Secreted protein of Ly-6 domain 1 from Bos taurus (Bovine).